The primary structure comprises 249 residues: Eukaryotic translation initiation factor 3 subunit K (249 aa).

In terms of domain architecture, PCI spans 46-222; that stretch reads FDCYANLALL…VKVPTNKENE (177 aa).

This sequence belongs to the eIF-3 subunit K family. As to quaternary structure, component of the eukaryotic translation initiation factor 3 (eIF-3) complex.

The protein resides in the cytoplasm. Functionally, component of the eukaryotic translation initiation factor 3 (eIF-3) complex, which is involved in protein synthesis of a specialized repertoire of mRNAs and, together with other initiation factors, stimulates binding of mRNA and methionyl-tRNAi to the 40S ribosome. The eIF-3 complex specifically targets and initiates translation of a subset of mRNAs involved in cell proliferation. This chain is Eukaryotic translation initiation factor 3 subunit K, found in Neosartorya fischeri (strain ATCC 1020 / DSM 3700 / CBS 544.65 / FGSC A1164 / JCM 1740 / NRRL 181 / WB 181) (Aspergillus fischerianus).